Consider the following 341-residue polypeptide: Anthranilate phosphoribosyltransferase (341 aa).

Residues G79, 82–83, T87, 89–92, 107–115, and S119 each bind 5-phospho-alpha-D-ribose 1-diphosphate; these read GD, NIST, and KHGNRAVSS. G79 lines the anthranilate pocket. S91 is a binding site for Mg(2+). N110 lines the anthranilate pocket. Anthranilate is bound at residue R165. Mg(2+)-binding residues include D224 and E225.

It belongs to the anthranilate phosphoribosyltransferase family. In terms of assembly, homodimer. Mg(2+) serves as cofactor.

It carries out the reaction N-(5-phospho-beta-D-ribosyl)anthranilate + diphosphate = 5-phospho-alpha-D-ribose 1-diphosphate + anthranilate. The protein operates within amino-acid biosynthesis; L-tryptophan biosynthesis; L-tryptophan from chorismate: step 2/5. In terms of biological role, catalyzes the transfer of the phosphoribosyl group of 5-phosphorylribose-1-pyrophosphate (PRPP) to anthranilate to yield N-(5'-phosphoribosyl)-anthranilate (PRA). The sequence is that of Anthranilate phosphoribosyltransferase from Bacillus cereus (strain ATCC 14579 / DSM 31 / CCUG 7414 / JCM 2152 / NBRC 15305 / NCIMB 9373 / NCTC 2599 / NRRL B-3711).